The chain runs to 535 residues: GMP synthase [glutamine-hydrolyzing] (535 aa).

One can recognise a Glutamine amidotransferase type-1 domain in the interval 4-210 (KILILDFGSQ…VHEICHCKPD (207 aa)). Residue Cys85 is the Nucleophile of the active site. Active-site residues include His184 and Glu186. In terms of domain architecture, GMPS ATP-PPase spans 211–403 (WVMGDYIAEA…LGLPREMVYR (193 aa)). An ATP-binding site is contributed by 238–244 (SGGVDSS).

Homodimer.

The enzyme catalyses XMP + L-glutamine + ATP + H2O = GMP + L-glutamate + AMP + diphosphate + 2 H(+). It participates in purine metabolism; GMP biosynthesis; GMP from XMP (L-Gln route): step 1/1. Catalyzes the synthesis of GMP from XMP. The protein is GMP synthase [glutamine-hydrolyzing] of Polynucleobacter asymbioticus (strain DSM 18221 / CIP 109841 / QLW-P1DMWA-1) (Polynucleobacter necessarius subsp. asymbioticus).